The sequence spans 132 residues: Large ribosomal subunit protein bL21 (132 aa).

A disordered region spans residues 112–132; sequence AEKPARKPRAKKTNEVTTDGA.

It belongs to the bacterial ribosomal protein bL21 family. As to quaternary structure, part of the 50S ribosomal subunit. Contacts protein L20.

This protein binds to 23S rRNA in the presence of protein L20. The chain is Large ribosomal subunit protein bL21 from Dehalococcoides mccartyi (strain ATCC BAA-2266 / KCTC 15142 / 195) (Dehalococcoides ethenogenes (strain 195)).